Reading from the N-terminus, the 284-residue chain is Homeobox protein Hox-D13 (284 aa).

Positions glycine 217–valine 276 form a DNA-binding region, homeobox.

Belongs to the Abd-B homeobox family.

The protein localises to the nucleus. Functionally, sequence-specific transcription factor that binds gene promoters and activates their transcription. Part of a developmental regulatory system that provides cells with specific positional identities on the anterior-posterior axis. This is Homeobox protein Hox-D13 (HOXD13) from Heterodontus francisci (Horn shark).